Here is a 102-residue protein sequence, read N- to C-terminus: Small ribosomal subunit protein uS10 (102 aa).

This sequence belongs to the universal ribosomal protein uS10 family. As to quaternary structure, part of the 30S ribosomal subunit.

Involved in the binding of tRNA to the ribosomes. The chain is Small ribosomal subunit protein uS10 from Citrifermentans bemidjiense (strain ATCC BAA-1014 / DSM 16622 / JCM 12645 / Bem) (Geobacter bemidjiensis).